A 397-amino-acid polypeptide reads, in one-letter code: Serine protease MT3772 (397 aa).

4 helical membrane-spanning segments follow: residues 9 to 29 (IAVL…GALG), 32 to 52 (LSFG…PHIV), 62 to 82 (LFAA…AGVV), and 102 to 122 (VIGV…LAMP). An intrachain disulfide couples Cys-214 to Cys-395. His-235 functions as the Proton acceptor in the catalytic mechanism. The active site involves Asp-264. Ser-343 functions as the Charge relay system in the catalytic mechanism.

This sequence belongs to the peptidase S1C family. In terms of assembly, monomer.

Its subcellular location is the membrane. Required for M.tuberculosis resistance to oxidative stress in addition to its role in resistance to acid, which is essential for virulence. In Mycobacterium tuberculosis (strain CDC 1551 / Oshkosh), this protein is Serine protease MT3772.